The primary structure comprises 491 residues: Keratin, type I cytoskeletal 39 (491 aa).

The head stretch occupies residues 1–96 (MDTKGCTTTN…WYGEGINSNE (96 aa)). The IF rod domain maps to 96-407 (EKETMQILNE…SLLESSDGKR (312 aa)). Residues 97 to 131 (KETMQILNERLANYLQKVRMLERENAELESKIQEE) form a coil 1A region. The interval 132 to 142 (SNKELPVLCPD) is linker 1. The tract at residues 143–243 (YLSYYTTIEE…HKEEINSLQC (101 aa)) is coil 1B. The linker 12 stretch occupies residues 244–259 (QLGERLDIEVTAAPSA). Residues 260 to 403 (DLNQVLQEMR…TTYRSLLESS (144 aa)) form a coil 2 region. Residues 404–491 (DGKRPCYPRA…PCFIIRPAKV (88 aa)) are tail.

It belongs to the intermediate filament family. Heterotetramer of two type I and two type II keratins. As to expression, expressed in skin and scalp. In the hair follicle, it is present in the upper hair cuticle and the upper cortex. Also present in the in the upper portion of beard hairs (at protein level).

May play a role in late hair differentiation. The protein is Keratin, type I cytoskeletal 39 (KRT39) of Homo sapiens (Human).